The sequence spans 84 residues: Dolichol phosphate-mannose biosynthesis regulatory protein (84 aa).

Helical transmembrane passes span 11-31 (FGLVAVSLIIFTYYTTWVILL) and 49-69 (YAVLLPLAAGLLLLLFVGLFI).

It belongs to the DPM2 family. In terms of assembly, component of the dolichol-phosphate mannose (DPM) synthase complex composed of DPM1, DPM2 and DPM3; in the complex interacts directly with DPM3. Component of the glycosylphosphatidylinositol-N-acetylglucosaminyltransferase (GPI-GnT) complex composed at least by PIGA, PIGC, PIGH, PIGP, PIGQ, PIGY and DPM2. Interacts with PIGA, PIGC and PIGQ.

Its subcellular location is the endoplasmic reticulum membrane. It functions in the pathway protein modification; protein glycosylation. Functionally, regulates the biosynthesis of dolichol phosphate-mannose. Regulatory subunit of the dolichol-phosphate mannose (DPM) synthase complex; essential for the ER localization and stable expression of DPM1. Part of the glycosylphosphatidylinositol-N-acetylglucosaminyltransferase (GPI-GnT) complex that catalyzes the transfer of N-acetylglucosamine from UDP-N-acetylglucosamine to phosphatidylinositol and participates in the first step of GPI biosynthesis. May act by regulating the GPI-GNT complex. This chain is Dolichol phosphate-mannose biosynthesis regulatory protein, found in Rattus norvegicus (Rat).